A 363-amino-acid polypeptide reads, in one-letter code: Putative type I specificity subunit S.MpnORF507P (363 aa).

This sequence belongs to the type-I restriction system S methylase family. In terms of assembly, the methyltransferase is composed of M and S polypeptides.

In terms of biological role, the specificity (S) subunit of a type I methyltransferase (MTase); this subunit dictates DNA sequence specificity. The single R subunit has multiple frameshifts and is probably not expressed. The polypeptide is Putative type I specificity subunit S.MpnORF507P (Mycoplasma pneumoniae (strain ATCC 29342 / M129 / Subtype 1) (Mycoplasmoides pneumoniae)).